The primary structure comprises 276 residues: NH(3)-dependent NAD(+) synthetase (276 aa).

43-50 is a binding site for ATP; that stretch reads GISGGVDS. Aspartate 49 contributes to the Mg(2+) binding site. A deamido-NAD(+)-binding site is contributed by arginine 146. Threonine 166 serves as a coordination point for ATP. Glutamate 171 contacts Mg(2+). Deamido-NAD(+)-binding residues include lysine 179 and aspartate 186. The ATP site is built by lysine 195 and threonine 217. Deamido-NAD(+) is bound at residue 266-267; that stretch reads HK.

Belongs to the NAD synthetase family. Homodimer.

It catalyses the reaction deamido-NAD(+) + NH4(+) + ATP = AMP + diphosphate + NAD(+) + H(+). The protein operates within cofactor biosynthesis; NAD(+) biosynthesis; NAD(+) from deamido-NAD(+) (ammonia route): step 1/1. Catalyzes the ATP-dependent amidation of deamido-NAD to form NAD. Uses ammonia as a nitrogen source. The sequence is that of NH(3)-dependent NAD(+) synthetase from Shewanella woodyi (strain ATCC 51908 / MS32).